The sequence spans 987 residues: SNF2 domain-containing protein ENL1 (987 aa).

Disordered regions lie at residues 1 to 172 (MASP…AYGG) and 224 to 245 (FGDY…ENHA). Pro residues-rich tracts occupy residues 18–27 (TPPAPTPLAA) and 51–71 (NPNP…PQEP). Residues 99-110 (DSIRDILDDLTT) show a composition bias toward basic and acidic residues. Polar residues predominate over residues 141 to 156 (PSQSQLNDGTKPSSSF). The segment covering 226–237 (DYDDEDDIDQDA) has biased composition (acidic residues). One can recognise a Helicase ATP-binding domain in the interval 292–466 (WVLHCRGTGG…WALFYFCCPE (175 aa)). Residue 305 to 312 (DDMGLGKT) coordinates ATP. Residues 417-420 (DEGH) carry the DEAH box motif. Residues 645-801 (SLLQNLVSEG…TRYFSKRDIQ (157 aa)) form the Helicase C-terminal domain.

This sequence belongs to the SNF2/RAD54 helicase family. Expressed in ovaries, roots, shoots and leaves.

Its subcellular location is the cytoplasm. It localises to the chromosome. Functionally, DNA helicase that acts as an essential component of the spindle assembly checkpoint. Plays an indispensable role in the development of seed endosperm. Is required to secure sister chromosome separation during endosperm syncytial mitosis, which involves extremely rapid free nuclear cycles. The protein is SNF2 domain-containing protein ENL1 of Oryza sativa subsp. japonica (Rice).